Consider the following 124-residue polypeptide: Ribonuclease P protein component (124 aa).

The protein belongs to the RnpA family. In terms of assembly, consists of a catalytic RNA component (M1 or rnpB) and a protein subunit.

It carries out the reaction Endonucleolytic cleavage of RNA, removing 5'-extranucleotides from tRNA precursor.. Its function is as follows. RNaseP catalyzes the removal of the 5'-leader sequence from pre-tRNA to produce the mature 5'-terminus. It can also cleave other RNA substrates such as 4.5S RNA. The protein component plays an auxiliary but essential role in vivo by binding to the 5'-leader sequence and broadening the substrate specificity of the ribozyme. This Synechocystis sp. (strain ATCC 27184 / PCC 6803 / Kazusa) protein is Ribonuclease P protein component.